Here is a 355-residue protein sequence, read N- to C-terminus: N-acetyl-gamma-glutamyl-phosphate reductase (355 aa).

Residue C152 is part of the active site.

It belongs to the NAGSA dehydrogenase family. Type 1 subfamily.

It is found in the cytoplasm. The catalysed reaction is N-acetyl-L-glutamate 5-semialdehyde + phosphate + NADP(+) = N-acetyl-L-glutamyl 5-phosphate + NADPH + H(+). Its pathway is amino-acid biosynthesis; L-arginine biosynthesis; N(2)-acetyl-L-ornithine from L-glutamate: step 3/4. Functionally, catalyzes the NADPH-dependent reduction of N-acetyl-5-glutamyl phosphate to yield N-acetyl-L-glutamate 5-semialdehyde. The protein is N-acetyl-gamma-glutamyl-phosphate reductase of Psychrobacter cryohalolentis (strain ATCC BAA-1226 / DSM 17306 / VKM B-2378 / K5).